The chain runs to 336 residues: Torsin-1B (336 aa).

The N-terminal stretch at Met1–Ala24 is a signal peptide. Asn64 carries an N-linked (GlcNAc...) asparagine glycan. Position 109–116 (Gly109–Asn116) interacts with ATP. A glycan (N-linked (GlcNAc...) asparagine) is linked at Asn165.

It belongs to the ClpA/ClpB family. Torsin subfamily. As to quaternary structure, homohexamer. Interacts with TOR1A; the interaction may be specific of neural tissues. Interacts with TOR1AIP1; TOR1AIP1 is required for TOR1B location on the nuclear membrane. Interacts (ATP-bound) with TOR1AIP2; important for endoplasmic reticulum integrity. N-glycosylated. As to expression, highly expressed in liver and muscle; lower expression levels are observed in brain (at protein level).

The protein localises to the endoplasmic reticulum lumen. Its subcellular location is the nucleus membrane. The catalysed reaction is ATP + H2O = ADP + phosphate + H(+). In terms of biological role, may serve as a molecular chaperone assisting in the proper folding of secreted and/or membrane proteins. Plays a role in non-neural cells nuclear envelope and endoplasmic reticulum integrity. May have a redundant function with TOR1A in non-neural tissues. This chain is Torsin-1B (Tor1b), found in Mus musculus (Mouse).